A 107-amino-acid chain; its full sequence is UPF0145 protein YbjQ (107 aa).

Belongs to the UPF0145 family.

In Salmonella dublin (strain CT_02021853), this protein is UPF0145 protein YbjQ.